The sequence spans 83 residues: MIMDTSLKNNDGALEADNKNYQDYKAEPDKTSDVLDVTKYNSVVDCCHKNYSTFTSEWYINERKYNDVPEGPKKAVVHRCTIL.

Belongs to the asfivirus L83L family. Interacts with host IL1B.

It is found in the host cytoplasm. Its function is as follows. May subvert the host innate immune response by interacting with host IL1B and interfering with its function. The sequence is that of Protein L83L from Ornithodoros (relapsing fever ticks).